A 270-amino-acid polypeptide reads, in one-letter code: Tetraspanin-17 (270 aa).

Residues 1–19 (MPGKHQQFQDPEVGCCGKY) are Cytoplasmic-facing. A helical membrane pass occupies residues 20 to 40 (FLFGFNIVFWVLGALFLAIGL). Residues 41–63 (WAWGEKGVLSNISGLTDLGGLDP) are Extracellular-facing. A glycan (N-linked (GlcNAc...) asparagine) is linked at asparagine 51. The chain crosses the membrane as a helical span at residues 64–84 (VWLFVVIGGIMSVLGFAGCIG). The Cytoplasmic portion of the chain corresponds to 85 to 94 (ALRENTFLLK). Residues 95–115 (FFSVFLGLIFFLELAAGILAF) traverse the membrane as a helical segment. Topologically, residues 116–234 (VFKDWIRDQL…GQFEKWLQDN (119 aa)) are extracellular. Disulfide bonds link cysteine 155–cysteine 223, cysteine 156–cysteine 188, cysteine 172–cysteine 182, and cysteine 189–cysteine 202. The N-linked (GlcNAc...) asparagine glycan is linked to asparagine 171. A helical membrane pass occupies residues 235 to 255 (LIVVAGVLVAIALLQICGICL). At 256–270 (AQNLVSDIEAVKANW) the chain is on the cytoplasmic side.

The protein belongs to the tetraspanin (TM4SF) family. In terms of assembly, interacts with ADAM10; the interaction influences ADAM10 substrate specificity, endocytosis and turnover.

The protein localises to the cell membrane. Its function is as follows. Part of TspanC8 subgroup, composed of 6 members that interact with the transmembrane metalloprotease ADAM10. This interaction is required for ADAM10 exit from the endoplasmic reticulum and for enzymatic maturation and trafficking to the cell surface as well as substrate specificity. Different TspanC8/ADAM10 complexes have distinct substrates. Seems to regulate VE-cadherin expression in endothelial cells probably through interaction with ADAM10, promoting leukocyte transmigration. The chain is Tetraspanin-17 (Tspan17) from Rattus norvegicus (Rat).